The primary structure comprises 300 residues: Putative S-adenosyl-L-methionine-dependent methyltransferase Mkms_0379 (300 aa).

Residues Asp-128 and 157 to 158 (DL) contribute to the S-adenosyl-L-methionine site.

The protein belongs to the UPF0677 family.

In terms of biological role, exhibits S-adenosyl-L-methionine-dependent methyltransferase activity. This is Putative S-adenosyl-L-methionine-dependent methyltransferase Mkms_0379 from Mycobacterium sp. (strain KMS).